Consider the following 283-residue polypeptide: Pyridoxine/pyridoxal/pyridoxamine kinase (283 aa).

Substrate-binding residues include Ser23 and His59. Residue Asp125 participates in ATP binding. Tyr136 provides a ligand contact to Mg(2+). ATP-binding positions include Thr157, Glu162, Thr195, 222–225 (HAHV), and Thr232. Residue Glu162 coordinates Mg(2+). Position 234 (Asp234) interacts with substrate.

It belongs to the pyridoxine kinase family. PdxK subfamily. Homodimer. Mg(2+) is required as a cofactor.

The enzyme catalyses pyridoxal + ATP = pyridoxal 5'-phosphate + ADP + H(+). The catalysed reaction is pyridoxine + ATP = pyridoxine 5'-phosphate + ADP + H(+). It catalyses the reaction pyridoxamine + ATP = pyridoxamine 5'-phosphate + ADP + H(+). It participates in cofactor metabolism; pyridoxal 5'-phosphate salvage; pyridoxal 5'-phosphate from pyridoxal: step 1/1. Its pathway is cofactor metabolism; pyridoxal 5'-phosphate salvage; pyridoxine 5'-phosphate from pyridoxine: step 1/1. The protein operates within cofactor metabolism; pyridoxal 5'-phosphate salvage; pyridoxamine 5'-phosphate from pyridoxamine: step 1/1. Functionally, B6-vitamer kinase involved in the salvage pathway of pyridoxal 5'-phosphate (PLP). Catalyzes the phosphorylation of pyridoxine (PN), pyridoxal (PL), and pyridoxamine (PM), forming their respective 5'-phosphorylated esters, i.e. PNP, PLP and PMP. The polypeptide is Pyridoxine/pyridoxal/pyridoxamine kinase (Bordetella pertussis (strain Tohama I / ATCC BAA-589 / NCTC 13251)).